Consider the following 356-residue polypeptide: Fe(3+) ions import ATP-binding protein FbpC 2 (356 aa).

One can recognise an ABC transporter domain in the interval 12-246 (LTVKNLNKFF…PNHLETAKFM (235 aa)). An ATP-binding site is contributed by 44-51 (GSSGCGKT).

This sequence belongs to the ABC transporter superfamily. Fe(3+) ion importer (TC 3.A.1.10) family. In terms of assembly, the complex is composed of two ATP-binding proteins (FbpC), two transmembrane proteins (FbpB) and a solute-binding protein (FbpA).

It is found in the cell inner membrane. It carries out the reaction Fe(3+)(out) + ATP + H2O = Fe(3+)(in) + ADP + phosphate + H(+). In terms of biological role, part of the ABC transporter complex FbpABC involved in Fe(3+) ions import. Responsible for energy coupling to the transport system. This chain is Fe(3+) ions import ATP-binding protein FbpC 2, found in Haemophilus influenzae (strain ATCC 51907 / DSM 11121 / KW20 / Rd).